Consider the following 904-residue polypeptide: MINLEDYWEDETPGPDREPTNELRNEVEETITLMELLKVSELKDICRSVSFPVSGRKAVLQDLIRNFLQNALVVGKSDPYRVQAVKFLIERIRKNEPLPVYKDLWNALRKGTPLSAITVRSMEGPPTVQQQSPSVIRQSPTQRRKTSTTSSTSRAPPPTNPDASSSSSSFAVPTIHFKESPFYKIQRLIPELVMNVEVTGGRGMCSAKFKLSKADYNLLSNPNSKHRLYLFSGMINPLGSRGNEPIQFPFPNELRCNNVQIKDNIRGFKSKPGTAKPADLTPHLKPYTQQNNVELIYAFTTKEYKLFGYIVEMITPEQLLEKVLQHPKIIKQATLLYLKKTLREDEEMGLTTTSTIMSLQCPISYTRMKYPSKSINCKHLQCFDALWFLHSQLQIPTWQCPVCQIDIALENLAISEFVDDILQNCQKNVEQVELTSDGKWTAILEDDDDSDSDSNDGSRSPEKGTSVSDHHCSSSHPSEPIIINLDSDDDEPNGNNPHVTNNHDDSNRHSNDNNNNSIKNNDSHNKNNNNNNNNNNNNNDNNNSIENNDSNSNNKHDHGSRSNTPSHNHTKNLMNDNDDDDDDRLMAEITSNHLKSTNTDILTEKGSSAPSRTLDPKSYNIVASETTTPVTNRVIPEYLGNSSSYIGKQLPNILGKTPLNVTAVDNSSHLISPDVSVSSPTPRNTASNASSSALSTPPLIRMSSLDPRGSTVPDKTIRPPINSNSYTASISDSFVQPQESSVFPPREQNMDMSFPSTVNSRFNDPRLNTTRFPDSTLRGATILSNNGLDQRNNSLPTTEAITRNDVGRQNSTPVLPTLPQNVPIRTNSNKSGLPLINNENSVPNPPNTATIPLQKSRLIVNPFIPRRPYSNVLPQKRQLSNTSSTSPIMGTWKTQDYGKKYNSG.

Residues 1–13 show a composition bias toward acidic residues; that stretch reads MINLEDYWEDETP. The disordered stretch occupies residues 1–21; it reads MINLEDYWEDETPGPDREPTN. The region spanning 34 to 68 is the SAP domain; that stretch reads MELLKVSELKDICRSVSFPVSGRKAVLQDLIRNFL. A disordered region spans residues 122-170; sequence MEGPPTVQQQSPSVIRQSPTQRRKTSTTSSTSRAPPPTNPDASSSSSSF. A compositionally biased stretch (polar residues) spans 127–136; the sequence is TVQQQSPSVI. At S132 the chain carries Phosphoserine. Low complexity predominate over residues 137-154; sequence RQSPTQRRKTSTTSSTSR. One can recognise a PINIT domain in the interval 162-314; sequence DASSSSSSFA…KLFGYIVEMI (153 aa). An SP-RING-type zinc finger spans residues 344 to 431; sequence EDEEMGLTTT…LQNCQKNVEQ (88 aa). Residues C377, H379, C400, and C403 each coordinate Zn(2+). Disordered regions lie at residues 443-584, 596-616, and 672-733; these read ILED…DDDR, STNTDILTEKGSSAPSRTLDP, and SPDV…ISDS. Residues 444–454 show a composition bias toward acidic residues; it reads LEDDDDSDSDS. A compositionally biased stretch (basic and acidic residues) spans 501–511; that stretch reads NNHDDSNRHSN. Low complexity predominate over residues 512–553; sequence DNNNNSIKNNDSHNKNNNNNNNNNNNNNDNNNSIENNDSNSN. Polar residues-rich tracts occupy residues 561-574, 596-611, and 672-683; these read RSNTPSHNHTKNLM, STNTDILTEKGSSAPS, and SPDVSVSSPTPR. The segment covering 684–699 has biased composition (low complexity); that stretch reads NTASNASSSALSTPPL. Over residues 721–733 the composition is skewed to polar residues; sequence INSNSYTASISDS. S794 is modified (phosphoserine). Positions 794–904 are required for localization at the bud neck; the sequence is SLPTTEAITR…QDYGKKYNSG (111 aa). Positions 877–894 are enriched in polar residues; it reads RQLSNTSSTSPIMGTWKT. Residues 877-904 are disordered; the sequence is RQLSNTSSTSPIMGTWKTQDYGKKYNSG.

The protein belongs to the PIAS family. In terms of assembly, interacts with UBC9 and CDC3. Post-translationally, phosphorylated in early M-phase. In terms of processing, autosumoylated upon ethanol stress.

It is found in the cytoplasm. The protein localises to the nucleus. Its subcellular location is the bud neck. It functions in the pathway protein modification; protein sumoylation. In terms of biological role, acts as an E3 ligase mediating SUMO/Smt3 attachment to septins and PCNA. May be involved in chromosome maintenance. This chain is E3 SUMO-protein ligase SIZ1 (SIZ1), found in Saccharomyces cerevisiae (strain ATCC 204508 / S288c) (Baker's yeast).